Consider the following 475-residue polypeptide: Ribulose bisphosphate carboxylase large chain (475 aa).

Residues 1 to 2 (MS) constitute a propeptide that is removed on maturation. Pro-3 carries the N-acetylproline modification. An N6,N6,N6-trimethyllysine modification is found at Lys-14. 2 residues coordinate substrate: Asn-123 and Thr-173. Lys-175 acts as the Proton acceptor in catalysis. Lys-177 is a binding site for substrate. Mg(2+) contacts are provided by Lys-201, Asp-203, and Glu-204. Lys-201 bears the N6-carboxylysine mark. Catalysis depends on His-294, which acts as the Proton acceptor. Substrate is bound by residues Arg-295, His-327, and Ser-379.

Belongs to the RuBisCO large chain family. Type I subfamily. Heterohexadecamer of 8 large chains and 8 small chains; disulfide-linked. The disulfide link is formed within the large subunit homodimers. Mg(2+) serves as cofactor. In terms of processing, the disulfide bond which can form in the large chain dimeric partners within the hexadecamer appears to be associated with oxidative stress and protein turnover.

Its subcellular location is the plastid. The protein resides in the chloroplast. It catalyses the reaction 2 (2R)-3-phosphoglycerate + 2 H(+) = D-ribulose 1,5-bisphosphate + CO2 + H2O. It carries out the reaction D-ribulose 1,5-bisphosphate + O2 = 2-phosphoglycolate + (2R)-3-phosphoglycerate + 2 H(+). Its function is as follows. RuBisCO catalyzes two reactions: the carboxylation of D-ribulose 1,5-bisphosphate, the primary event in carbon dioxide fixation, as well as the oxidative fragmentation of the pentose substrate in the photorespiration process. Both reactions occur simultaneously and in competition at the same active site. The sequence is that of Ribulose bisphosphate carboxylase large chain from Lotus japonicus (Lotus corniculatus var. japonicus).